Consider the following 343-residue polypeptide: F17c-G fimbrial adhesin (343 aa).

An N-terminal signal peptide occupies residues 1-22; that stretch reads MTNFYKVFLAVFILVCCNISHA. The tract at residues 23 to 199 is receptor-binding lectin domain; that stretch reads AVSFIGSTEN…LNPFTLNDTV (177 aa). A carbohydrate contacts are provided by residues 65–66, 110–111, and 138–141; these read AN, DT, and STQG. The cysteines at positions 75 and 132 are disulfide-linked. Residues 200-343 are fimbrillin-binding domain; the sequence is TSCRLLTPSA…GISTFTFSYQ (144 aa). Positions 287-307 are disordered; that stretch reads LKFGPDSPVKGNENQWQLSTG. Positions 298–307 are enriched in polar residues; that stretch reads NENQWQLSTG.

Belongs to the fimbrial protein family.

It is found in the fimbrium. Functionally, essential fimbrial adhesion factor that mediates binding to N-acetylglucosamine-containing receptors in the host intestinal microvilli, leading to colonization of the intestinal tissue, and diarrhea or septicemia. Also confers adhesiveness to laminin and basement membranes. The chain is F17c-G fimbrial adhesin (f17cG) from Escherichia coli.